The following is a 405-amino-acid chain: MSDITVANYHAFPDARGHFGRYGGRFVAETLIGPLQELAQAYDAARHDPDFIAAYNKDLKDYVGRPSPIYHAERLSRKVGGAQILLKREDLNHTGAHKINNTIGQALLAARMGKTRIIAETGAGQHGVASATVAARLGLECVVYMGATDIERQQINVYRMKLLGATVVPVTSGSATLKDALNEAMRDWVTHVGHTFYIIGTVAGPDPYPRMVRDFNAIVGREARAQMIEDYGRLPDAMTACVGGGSNAIGLFHAFLNDASVRIYGAEAAGDGIATGRHAASIVAGRPGVLHGNRTYVICDDDGQILETHSVSAGLDYPGVGPEHAFLADSGRVQYVGIRDEEALAAFHLLAHTEGILAALESSHAVAHAMTLARDLPKDALVLCNLSGRGDKDVHTIAAREGVRV.

K98 carries the post-translational modification N6-(pyridoxal phosphate)lysine.

Belongs to the TrpB family. In terms of assembly, tetramer of two alpha and two beta chains. Pyridoxal 5'-phosphate is required as a cofactor.

It catalyses the reaction (1S,2R)-1-C-(indol-3-yl)glycerol 3-phosphate + L-serine = D-glyceraldehyde 3-phosphate + L-tryptophan + H2O. Its pathway is amino-acid biosynthesis; L-tryptophan biosynthesis; L-tryptophan from chorismate: step 5/5. Functionally, the beta subunit is responsible for the synthesis of L-tryptophan from indole and L-serine. This chain is Tryptophan synthase beta chain, found in Xylella fastidiosa (strain M12).